The chain runs to 192 residues: Elongation factor P (192 aa).

Lys-37 is subject to N6-(3,6-diaminohexanoyl)-5-hydroxylysine.

It belongs to the elongation factor P family. Post-translationally, may be beta-lysylated on the epsilon-amino group of Lys-37 by the combined action of EpmA and EpmB, and then hydroxylated on the C5 position of the same residue by EpmC (if this protein is present). Lysylation is critical for the stimulatory effect of EF-P on peptide-bond formation. The lysylation moiety may extend toward the peptidyltransferase center and stabilize the terminal 3-CCA end of the tRNA. Hydroxylation of the C5 position on Lys-37 may allow additional potential stabilizing hydrogen-bond interactions with the P-tRNA.

Its subcellular location is the cytoplasm. It participates in protein biosynthesis; polypeptide chain elongation. In terms of biological role, involved in peptide bond synthesis. Alleviates ribosome stalling that occurs when 3 or more consecutive Pro residues or the sequence PPG is present in a protein, possibly by augmenting the peptidyl transferase activity of the ribosome. Modification of Lys-37 is required for alleviation. The chain is Elongation factor P from Acinetobacter baylyi (strain ATCC 33305 / BD413 / ADP1).